Reading from the N-terminus, the 373-residue chain is Probable protein phosphatase 2C 73 (373 aa).

In terms of domain architecture, PPM-type phosphatase spans 61–354 (LASLFSKRGE…DDMSVVCLFL (294 aa)). Mn(2+) is bound by residues D97, G98, D299, and D345.

This sequence belongs to the PP2C family. The cofactor is Mg(2+). It depends on Mn(2+) as a cofactor.

The catalysed reaction is O-phospho-L-seryl-[protein] + H2O = L-seryl-[protein] + phosphate. It carries out the reaction O-phospho-L-threonyl-[protein] + H2O = L-threonyl-[protein] + phosphate. This chain is Probable protein phosphatase 2C 73 (PPC6-7), found in Arabidopsis thaliana (Mouse-ear cress).